The chain runs to 240 residues: MLSTAAYRDPDRELVMGPQGSAGPVQMRFSPYAFNGGTVLAIAGEDFSIVASDTRLSEGFSIHTRDSPKCYKLTDKTVIGCSGFHGDCLTLTKIIEARLKMYKHSNNKAMTTGAIAAMLSTILYSRRFFPYYVYNIIEGLDEEGKGAVYSFDPVGSYQRDSFKAGGSASAMLQPLLDNQVGFKNMQNVEHVPLTLDRAMRLVKDVFISAAERDVYTGDALRICIVTKEGIREETVPLRKD.

Met1 carries the N-acetylmethionine modification. A propeptide spanning residues Met1 to Met27 is cleaved from the precursor. O-linked (GlcNAc) serine glycosylation occurs at Ser57. Phosphoserine occurs at positions 61 and 67. At Tyr149 the chain carries Phosphotyrosine. Residue Ser161 is modified to Phosphoserine. The residue at position 203 (Lys203) is an N6-acetyllysine. Residue Ser208 is glycosylated (O-linked (GlcNAc) serine).

The protein belongs to the peptidase T1B family. In terms of assembly, the 26S proteasome consists of a 20S proteasome core and two 19S regulatory subunits. The 20S proteasome core is a barrel-shaped complex made of 28 subunits that are arranged in four stacked rings. The two outer rings are each formed by seven alpha subunits, and the two inner rings are formed by seven beta subunits. The proteolytic activity is exerted by three beta-subunits PSMB5, PSMB6 and PSMB7. Interacts with SERPINB2. Interacts with RFPL4A. Ubiquitous.

It is found in the cytoplasm. Its subcellular location is the nucleus. Functionally, non-catalytic component of the 20S core proteasome complex involved in the proteolytic degradation of most intracellular proteins. This complex plays numerous essential roles within the cell by associating with different regulatory particles. Associated with two 19S regulatory particles, forms the 26S proteasome and thus participates in the ATP-dependent degradation of ubiquitinated proteins. The 26S proteasome plays a key role in the maintenance of protein homeostasis by removing misfolded or damaged proteins that could impair cellular functions, and by removing proteins whose functions are no longer required. Associated with the PA200 or PA28, the 20S proteasome mediates ubiquitin-independent protein degradation. This type of proteolysis is required in several pathways including spermatogenesis (20S-PA200 complex) or generation of a subset of MHC class I-presented antigenic peptides (20S-PA28 complex). The sequence is that of Proteasome subunit beta type-1 (Psmb1) from Rattus norvegicus (Rat).